The chain runs to 808 residues: Phospholipase D alpha 1 (808 aa).

One can recognise a C2 domain in the interval 1-125 (MAKTLLHGTL…LEGEEVDKWV (125 aa)). A Ca(2+)-binding site is contributed by D186. One can recognise a PLD phosphodiesterase 1 domain in the interval 326–364 (TIFTHHQKIVVVDSEMPTSGSENRRVVSFVGGIDLCDGR). Residues H331, K333, and D338 contribute to the active site. H331 contributes to the a 1,2-diacyl-sn-glycero-3-phosphate binding site. The Ca(2+) site is built by H370 and H404. A PLD phosphodiesterase 2 domain is found at 654–681 (FMIYVHAKMMIVDDEYIIIGSANINQRS). Active-site residues include H659, K661, and D666. H659 is a binding site for a 1,2-diacyl-sn-glycero-3-phosphate. Position 720 (E720) interacts with Ca(2+).

The protein belongs to the phospholipase D family. C2-PLD subfamily. Ca(2+) is required as a cofactor.

The catalysed reaction is a 1,2-diacyl-sn-glycero-3-phosphocholine + H2O = a 1,2-diacyl-sn-glycero-3-phosphate + choline + H(+). In terms of biological role, hydrolyzes glycerol-phospholipids at the terminal phosphodiesteric bond. Plays an important role in various cellular processes. The protein is Phospholipase D alpha 1 (PLD1) of Spuriopimpinella brachycarpa (Chamnamul).